A 311-amino-acid chain; its full sequence is GTP cyclohydrolase FolE2 (311 aa).

This sequence belongs to the GTP cyclohydrolase IV family.

The enzyme catalyses GTP + H2O = 7,8-dihydroneopterin 3'-triphosphate + formate + H(+). Its pathway is cofactor biosynthesis; 7,8-dihydroneopterin triphosphate biosynthesis; 7,8-dihydroneopterin triphosphate from GTP: step 1/1. Functionally, converts GTP to 7,8-dihydroneopterin triphosphate. This Hydrogenovibrio crunogenus (strain DSM 25203 / XCL-2) (Thiomicrospira crunogena) protein is GTP cyclohydrolase FolE2.